A 364-amino-acid chain; its full sequence is DNA polymerase IV (364 aa).

Residues 14-198 form the UmuC domain; it reads IIHIDMDAFF…LPVEKFHGVG (185 aa). Mg(2+) contacts are provided by Asp18 and Asp116. Glu117 is an active-site residue.

It belongs to the DNA polymerase type-Y family. Monomer. Mg(2+) is required as a cofactor.

The protein localises to the cytoplasm. It carries out the reaction DNA(n) + a 2'-deoxyribonucleoside 5'-triphosphate = DNA(n+1) + diphosphate. Poorly processive, error-prone DNA polymerase involved in untargeted mutagenesis. Copies undamaged DNA at stalled replication forks, which arise in vivo from mismatched or misaligned primer ends. These misaligned primers can be extended by PolIV. Exhibits no 3'-5' exonuclease (proofreading) activity. May be involved in translesional synthesis, in conjunction with the beta clamp from PolIII. The polypeptide is DNA polymerase IV (Lactococcus lactis subsp. cremoris (strain MG1363)).